A 113-amino-acid chain; its full sequence is U11-theraphotoxin-Hhn1u (113 aa).

Positions 1–21 (MNTVRVTFLLVFVLAVSLGQA) are cleaved as a signal peptide. Residues 22-74 (DKDENRMEMQEKTEQGKSYLDFAENLLLQKLEELEAKLLEEDSEESRNSRQKR) constitute a propeptide that is removed on maturation. 3 disulfides stabilise this stretch: C75–C90, C82–C95, and C89–C110.

It belongs to the neurotoxin 14 (magi-1) family. 01 (HNTX-16) subfamily. As to expression, expressed by the venom gland.

It is found in the secreted. Its function is as follows. Probable ion channel inhibitor. The chain is U11-theraphotoxin-Hhn1u from Cyriopagopus hainanus (Chinese bird spider).